The primary structure comprises 1235 residues: MFSGGGGPLSPGGKSAARAASGFFAPAGPRGAGRGPPPCLRQNFYNPYLAPVGTQQKPTGPTQRHTYYSECDEFRFIAPRVLDEDAPPEKRAGVHDGHLKRAPKVYCGGDERDVLRVGSGGFWPRRSRLWGGVDHAPAGFNPTVTVFHVYDILENVEHAYGMRAAQFHARFMDAITPTGTVITLLGLTPEGHRVAVHVYGTRQYFYMNKEEVDRHLQCRAPRDLCERMAAALRESPGASFRGISADHFEAEVVERTDVYYYETRPALFYRVYVRSGRVLSYLCDNFCPAIKKYEGGVDATTRFILDNPGFVTFGWYRLKPGRNNTLAQPRAPMAFGTSSDVEFNCTADNLAIEGGMSDLPAYKLMCFDIECKAGGEDELAFPVAGHPEDLVIQISCLLYDLSTTALEHVLLFSLGSCDLPESHLNELAARGLPTPVVLEFDSEFEMLLAFMTLVKQYGPEFVTGYNIINFDWPFLLAKLTDIYKVPLDGYGRMNGRGVFRVWDIGQSHFQKRSKIKVNGMVNIDMYGIITDKIKLSSYKLNAVAEAVLKDKKKDLSYRDIPAYYATGPAQRGVIGEYCIQDSLLVGQLFFKFLPHLELSAVARLAGINITRTIYDGQQIRVFTCLLRLADQKGFILPDTQGRFRGAGGEAPKRPAAAREDEERPEEEGEDEDEREEGGGEREPEGARETAGRHVGYQGAKVLDPTSGFHVNPVVVFDFASLYPSIIQAHNLCFSTLSLRADAVAHLEAGKDYLEIEVGGRRLFFVKAHVRESLLSILLRDWLAMRKQIRSRIPQSSPEEAVLLDKQQAAIKVVCNSVYGFTGVQHGLLPCLHVAATVTTIGREMLLATREYVHARWAAFEQLLADFPEAADMRAPGPYSMRIIYGDTDSIFVLCRGLTAAGLTAMGDKMASHISRALFLPPIKLECEKTFTKLLLIAKKKYIGVIYGGKMLIKGVDLVRKNNCAFINRTSRALVDLLFYDDTVSGAAAALAERPAEEWLARPLPEGLQAFGAVLVDAHRRITDPERDIQDFVLTAELSRHPRAYTNKRLAHLTVYYKLMARRAQVPSIKDRIPYVIVAQTREVEETVARLAALRELDAAAPGDEPAPPAALPSPAKRPRETPSHADPPGGASKPRKLLVSELAEDPAYAIAHGVALNTDYYFSHLLGAACVTFKALFGNNAKITESLLKRFIPEVWHPPDDVAARLRAAGFGAVGAGATAEETRRMLHRAFDTLA.

Disordered regions lie at residues Gln640–His693 and Ala1098–Pro1134. The segment covering Ala650 to Glu661 has biased composition (basic and acidic residues). The span at Glu662 to Glu675 shows a compositional bias: acidic residues. Basic and acidic residues predominate over residues Glu676 to Gly691.

Belongs to the DNA polymerase type-B family. Forms a complex with the ssDNA-binding protein UL29, the DNA polymerase processivity factor, and the alkaline exonuclease. Interacts with the putative helicase-primase complex subunit UL8; this interaction may coordinate leading and lagging strand DNA synthesis at the replication fork.

The protein localises to the host nucleus. The enzyme catalyses DNA(n) + a 2'-deoxyribonucleoside 5'-triphosphate = DNA(n+1) + diphosphate. The catalysed reaction is Endonucleolytic cleavage to 5'-phosphomonoester.. Its function is as follows. Replicates viral genomic DNA. The replication complex is composed of six viral proteins: the DNA polymerase, processivity factor, primase, primase-associated factor, helicase, and ssDNA-binding protein. Additionally, the polymerase contains an intrinsic ribonuclease H (RNase H) activity that specifically degrades RNA/DNA heteroduplexes or duplex DNA substrates in the 5' to 3' direction. Therefore, it can catalyze the excision of the RNA primers that initiate the synthesis of Okazaki fragments at a replication fork during viral DNA replication. This is DNA polymerase catalytic subunit from Human herpesvirus 1 (strain KOS) (HHV-1).